The chain runs to 175 residues: Sec-independent protein translocase protein TatB (175 aa).

A helical transmembrane segment spans residues 1–21; sequence MLDLGLSKMALIGVVALVVLG. Disordered stretches follow at residues 96-115 and 153-175; these read VSPG…AASG and VQSG…ARFL. The segment covering 160 to 175 has biased composition (basic residues); that stretch reads VARHRPASLRRPARFL.

This sequence belongs to the TatB family. The Tat system comprises two distinct complexes: a TatABC complex, containing multiple copies of TatA, TatB and TatC subunits, and a separate TatA complex, containing only TatA subunits. Substrates initially bind to the TatABC complex, which probably triggers association of the separate TatA complex to form the active translocon.

The protein resides in the cell inner membrane. In terms of biological role, part of the twin-arginine translocation (Tat) system that transports large folded proteins containing a characteristic twin-arginine motif in their signal peptide across membranes. Together with TatC, TatB is part of a receptor directly interacting with Tat signal peptides. TatB may form an oligomeric binding site that transiently accommodates folded Tat precursor proteins before their translocation. The chain is Sec-independent protein translocase protein TatB from Burkholderia mallei (strain ATCC 23344).